A 141-amino-acid polypeptide reads, in one-letter code: Large ribosomal subunit protein uL22 (141 aa).

Residues Glu-110–Ser-141 form a disordered region. Positions Lys-117–Lys-134 are enriched in low complexity.

The protein belongs to the universal ribosomal protein uL22 family. In terms of assembly, part of the 50S ribosomal subunit.

Functionally, this protein binds specifically to 23S rRNA; its binding is stimulated by other ribosomal proteins, e.g. L4, L17, and L20. It is important during the early stages of 50S assembly. It makes multiple contacts with different domains of the 23S rRNA in the assembled 50S subunit and ribosome. Its function is as follows. The globular domain of the protein is located near the polypeptide exit tunnel on the outside of the subunit, while an extended beta-hairpin is found that lines the wall of the exit tunnel in the center of the 70S ribosome. This Campylobacter jejuni (strain RM1221) protein is Large ribosomal subunit protein uL22.